The primary structure comprises 444 residues: MFQKTDFLSKIFSSSSHPLTGSQNIVVKDPQTLDFAMQSQNEIVCSLRERSHMNTMSYAQTQMMAIDEIRAFQSEGHLHLKYISLIIAMMAETAVVTSRSWFPYFSCPSKSQRLAEAEGRILSALGIKYLARLIQIPFKNTEISTITVNCESEQPIVKAKYPIVLIHGFGAGVALWGSAIKRLAQFQTVHAFDLPGFGRSSRPKFSSDPETAETEMIDSIEQWRDKMNLEKMNLVGHSFGGYLATSYALKYPKRVENLILADPWGFNEMDPEFAQKLTSRQKNIFWVIQQFNPLAVLRLVGGYGPSLVRRLRPDLALKYSEDVYDYIYLANSRDPTGEEVFKCLSENLGWAKQPMSKRFHELDNTVPVTFIHGERSWIDWRTTRRLFGELEHVESHIMDSAGHHVYADDADKFVQLVIGSLKDGKTGELVPEEVNLEEEIVTPI.

The 248-residue stretch at 162–409 folds into the AB hydrolase-1 domain; the sequence is PIVLIHGFGA…SAGHHVYADD (248 aa).

Belongs to the peptidase S33 family. ABHD4/ABHD5 subfamily. Interacts with atgl-1; the interaction tethers atgl-1 to lipid droplets. Expressed in the hypodermis and intestine.

Its subcellular location is the lipid droplet. Its function is as follows. Acts coordinately with phospholipase atgl-1 within the lipolytic cascade to distribute stored energy to tissues to maintain energy levels during the dauer phase. Localizes atgl-1 to lipid droplets, possibly to facilitate triglyceride hydrolysis. Regulates lipid droplet size, lipid content, the exchange of lipids between lipid droplets and fusion of lipid droplets during the dauer phase. This Caenorhabditis elegans protein is Abhydrolase domain-containing protein abhd-5.2.